A 465-amino-acid chain; its full sequence is Indoleacetamide hydrolase (465 aa).

Positions 1 to 40 (MVRGRHRSRDPQRRDLRGRDRRSASRTDARRQSAAERGCR) are disordered. Positions 9–39 (RDPQRRDLRGRDRRSASRTDARRQSAAERGC) are enriched in basic and acidic residues. The active-site Charge relay system is S149. S173 functions as the Acyl-ester intermediate in the catalytic mechanism.

This sequence belongs to the amidase family.

It participates in plant hormone metabolism; auxin biosynthesis. Hydrolyzes indole-3-acetamide (IAM) into indole-3-acetic acid (IAA). The sequence is that of Indoleacetamide hydrolase (bam) from Bradyrhizobium japonicum.